Here is a 393-residue protein sequence, read N- to C-terminus: N-acyl-phosphatidylethanolamine-hydrolyzing phospholipase D (393 aa).

Methionine 1 carries the post-translational modification N-acetylmethionine. A compositionally biased stretch (polar residues) spans 1 to 16; it reads MDENESNQSLMTSSQY. The tract at residues 1–40 is disordered; sequence MDENESNQSLMTSSQYPKEAVRKRQNSARNSGASDSSRFS. Zn(2+) is bound by residues histidine 185 and histidine 187. An N-acyl-1,2-diacyl-sn-glycero-3-phosphoethanolamine is bound at residue tyrosine 188. Positions 189, 190, and 253 each coordinate Zn(2+). Positions 256 and 260 each coordinate deoxycholate. Position 284 (aspartate 284) interacts with Zn(2+). An N-acyl-1,2-diacyl-sn-glycero-3-phosphoethanolamine is bound at residue histidine 321. Position 343 (histidine 343) interacts with Zn(2+). A deoxycholate-binding site is contributed by alanine 348.

Belongs to the NAPE-PLD family. Homodimer. Bile acids promote the assembly of inactive monomers into an active dimer and enable catalysis. It depends on Zn(2+) as a cofactor. In terms of tissue distribution, widely expressed. Highest expression in brain, kidney and testis (at protein level). Expressed in adipose tissue (at protein level).

It is found in the golgi apparatus membrane. It localises to the early endosome membrane. Its subcellular location is the nucleus envelope. The protein resides in the nucleus. The protein localises to the nucleoplasm. The catalysed reaction is an N-acyl-1,2-diacyl-sn-glycero-3-phosphoethanolamine + H2O = an N-acylethanolamine + a 1,2-diacyl-sn-glycero-3-phosphate + H(+). It catalyses the reaction N-butanoyl-1-hexadecanoyl-2-(9Z,12Z-octadecadienoyl)-sn-glycero-3-phosphoethanolamine + H2O = N-butanoyl ethanolamine + 1-hexadecanoyl-2-(9Z,12Z-octadecadienoyl)-sn-glycero-3-phosphate + H(+). It carries out the reaction N-hexanoyl-1-hexadecanoyl-2-(9Z,12Z-octadecadienoyl)-sn-glycero-3-phosphoethanolamine + H2O = N-hexanoyl ethanolamine + 1-hexadecanoyl-2-(9Z,12Z-octadecadienoyl)-sn-glycero-3-phosphate + H(+). The enzyme catalyses N-octanoyl-1-hexadecanoyl-2-(9Z,12Z-octadecadienoyl)-sn-glycero-3-phosphoethanolamine + H2O = N-octanoyl ethanolamine + 1-hexadecanoyl-2-(9Z,12Z-octadecadienoyl)-sn-glycero-3-phosphate + H(+). The catalysed reaction is N-decanoyl-1-hexadecanoyl-2-(9Z,12Z-octadecadienoyl)-sn-glycero-3-phosphoethanolamine + H2O = N-decanoyl ethanolamine + 1-hexadecanoyl-2-(9Z,12Z-octadecadienoyl)-sn-glycero-3-phosphate + H(+). It catalyses the reaction N-dodecanoyl-1,2-di-(9Z-octadecenoyl)-sn-glycero-3-phosphoethanolamine + H2O = N-dodecanoylethanolamine + 1,2-di-(9Z-octadecenoyl)-sn-glycero-3-phosphate + H(+). It carries out the reaction N-tetradecanoyl-1,2-di-(9Z-octadecenoyl)-sn-glycero-3-phosphoethanolamine + H2O = N-tetradecanoylethanolamine + 1,2-di-(9Z-octadecenoyl)-sn-glycero-3-phosphate + H(+). The enzyme catalyses N-hexadecanoyl-1,2-di-(9Z-octadecenoyl)-sn-glycero-3-phosphoethanolamine + H2O = N-hexadecanoylethanolamine + 1,2-di-(9Z-octadecenoyl)-sn-glycero-3-phosphate + H(+). The catalysed reaction is N,1-dihexadecanoyl-2-(9Z,12Z-octadecadienoyl)-sn-glycero-3-phosphoethanolamine + H2O = 1-hexadecanoyl-2-(9Z,12Z-octadecadienoyl)-sn-glycero-3-phosphate + N-hexadecanoylethanolamine + H(+). It catalyses the reaction N-octadecanoyl-1,2-di-(9Z-octadecenoyl)-sn-glycero-3-phosphoethanolamine + H2O = N-octadecanoyl ethanolamine + 1,2-di-(9Z-octadecenoyl)-sn-glycero-3-phosphate + H(+). It carries out the reaction N,1,2-tri-(9Z-octadecenoyl)-sn-glycero-3-phosphoethanolamine + H2O = N-(9Z-octadecenoyl) ethanolamine + 1,2-di-(9Z-octadecenoyl)-sn-glycero-3-phosphate + H(+). The enzyme catalyses N-(5Z,8Z,11Z,14Z-eicosatetraenoyl)-1,2-diacyl-sn-glycero-3-phosphoethanolamine + H2O = N-(5Z,8Z,11Z,14Z-eicosatetraenoyl)-ethanolamine + a 1,2-diacyl-sn-glycero-3-phosphate + H(+). The catalysed reaction is N-(5Z,8Z,11Z,14Z-eicosatetraenoyl)-1,2-di-(9Z-octadecenoyl)-sn-glycero-3-phosphoethanolamine + H2O = N-(5Z,8Z,11Z,14Z-eicosatetraenoyl)-ethanolamine + 1,2-di-(9Z-octadecenoyl)-sn-glycero-3-phosphate + H(+). It catalyses the reaction 1-O-(1Z-octadecenoyl)-2-(9Z-octadecenoyl)-sn-glycero-3-phospho-N-hexadecanoyl-ethanolamine + H2O = 1-O-(1Z-octadecenoyl)-2-(9Z-octadecenoyl)-sn-glycero-3-phosphate + N-hexadecanoylethanolamine + H(+). It carries out the reaction N,1-diacyl-sn-glycero-3-phosphoethanolamine + H2O = an N-acylethanolamine + a 1-acyl-sn-glycero-3-phosphate + H(+). The enzyme catalyses N,1-dihexadecanoyl-sn-glycero-3-phosphoethanolamine + H2O = N-hexadecanoylethanolamine + 1-hexadecanoyl-sn-glycero-3-phosphate + H(+). The catalysed reaction is N-(5Z,8Z,11Z,14Z-eicosatetraenoyl)-1-(9Z-octadecenoyl)-sn-glycero-3-phosphoethanolamine + H2O = N-(5Z,8Z,11Z,14Z-eicosatetraenoyl)-ethanolamine + 1-(9Z-octadecenoyl)-sn-glycero-3-phosphate + H(+). With respect to regulation, activated by divalent cations. Activated by bile acids and their conjugates, except for lithocholic acid which is rather inhibitory. Binding of deoxycholic acid favors the selective release of anandamide and likely other unsatured long FAEs. Inhibited by phosphatidylethanolamines. Functionally, D-type phospholipase that hydrolyzes N-acyl-phosphatidylethanolamines (NAPEs) to produce bioactive N-acylethanolamines/fatty acid ethanolamides (NAEs/FAEs) and phosphatidic acid. Cleaves the terminal phosphodiester bond of diacyl- and alkenylacyl-NAPEs, primarily playing a role in the generation of long-chain saturated and monounsaturated NAEs in the brain. May control NAPE homeostasis in dopaminergic neuron membranes and regulate neuron survival, partly through RAC1 activation. As a regulator of lipid metabolism in the adipose tissue, mediates the crosstalk between adipocytes, gut microbiota and immune cells to control body temperature and weight. In particular, regulates energy homeostasis by promoting cold-induced brown or beige adipocyte differentiation program to generate heat from fatty acids and glucose. Has limited D-type phospholipase activity toward N-acyl lyso-NAPEs. The polypeptide is N-acyl-phosphatidylethanolamine-hydrolyzing phospholipase D (NAPEPLD) (Homo sapiens (Human)).